The following is a 415-amino-acid chain: Lipoyl synthase, apicoplast (415 aa).

A signal peptide spans 1–23; sequence MHFGIPSLFYLYILFSIIMRIKC. Residues Cys-153, Cys-158, Cys-164, Cys-179, Cys-183, Cys-186, and Ser-394 each coordinate [4Fe-4S] cluster. In terms of domain architecture, Radical SAM core spans 165 to 383; that stretch reads WNIGTATIML…KEEGLKMGFK (219 aa).

The protein belongs to the radical SAM superfamily. Lipoyl synthase family. It depends on [4Fe-4S] cluster as a cofactor.

The protein localises to the plastid. The protein resides in the apicoplast. It catalyses the reaction [[Fe-S] cluster scaffold protein carrying a second [4Fe-4S](2+) cluster] + N(6)-octanoyl-L-lysyl-[protein] + 2 oxidized [2Fe-2S]-[ferredoxin] + 2 S-adenosyl-L-methionine + 4 H(+) = [[Fe-S] cluster scaffold protein] + N(6)-[(R)-dihydrolipoyl]-L-lysyl-[protein] + 4 Fe(3+) + 2 hydrogen sulfide + 2 5'-deoxyadenosine + 2 L-methionine + 2 reduced [2Fe-2S]-[ferredoxin]. It participates in protein modification; protein lipoylation via endogenous pathway; protein N(6)-(lipoyl)lysine from octanoyl-[acyl-carrier-protein]: step 2/2. Its function is as follows. Catalyzes the radical-mediated insertion of two sulfur atoms into the C-6 and C-8 positions of the octanoyl moiety bound to the lipoyl domains of lipoate-dependent enzymes, thereby converting the octanoylated domains into lipoylated derivatives. In Plasmodium falciparum (isolate 3D7), this protein is Lipoyl synthase, apicoplast.